The sequence spans 308 residues: Tetraspanin-12 (308 aa).

Topologically, residues 1-41 (MANRRQPVQHRAQQRVYRQSQIRYAPGAGGESEISCCVKYS) are cytoplasmic. Residues 42–62 (VFSFNVIFFLLGFGLLLFGVW) traverse the membrane as a helical segment. Residues 63-86 (AQIEKNTFVNMLSKASKLYLDPTW) are Extracellular-facing. Residues 87–107 (PLLIVGFLTFIIGFSGCVGSL) traverse the membrane as a helical segment. Over 108-112 (RENTS) the chain is Cytoplasmic. A helical transmembrane segment spans residues 113–133 (FLTFYSTLLGLLLIAEFSAGV). Residues 134–268 (FAYACRDQLD…PKLQLWLNNN (135 aa)) are Extracellular-facing. Asn-213 is a glycosylation site (N-linked (GlcNAc...) asparagine). A helical membrane pass occupies residues 269-289 (MLLVAVSMVIIAIIQVLGICF). The Cytoplasmic segment spans residues 290–308 (AQNLKSDILAQRAKWYYTH).

This sequence belongs to the tetraspanin (TM4SF) family. As to quaternary structure, may interact with protease sup-17; the interaction promotes sup-17 cell membrane localization. As to expression, expressed in the germline.

It is found in the cell membrane. It localises to the cytoplasmic vesicle membrane. Its subcellular location is the endosome membrane. The protein localises to the early endosome membrane. The protein resides in the late endosome membrane. It is found in the recycling endosome membrane. It localises to the golgi apparatus. Its subcellular location is the trans-Golgi network membrane. Functionally, functions redundantly with tsp-14 isoform a to regulate body size, embryonic and vulva development. Functions redundantly with tsp-14 (isoforms a and b) to regulate cell fate specification in the postembryonic mesodermal M lineage and male development. May regulate BMP-like Sma/Mab signaling by mediating protease sup-17 trafficking to the cell surface. Together with tsp-14, functions redundantly to maintain cell surface levels of the BMP type II receptor daf-4 (but not BMP type I receptor sma-6), probably by regulating endosomal sorting of receptors and their targeting to degradative lysosomes. Together with tsp-14 involved in maintaining the structural and functional integrity of the endosomal network. Together with tsp-14, probably acts by modulating the activation of glp-1, a Notch-like receptor, to regulate germline maturation. Probably acts by modulating the activation of lin-12, a Notch-like receptor, to regulate cell fate specification such as the anchor cell/ventral uterine precursor cell decision. The polypeptide is Tetraspanin-12 (Caenorhabditis elegans).